Here is a 541-residue protein sequence, read N- to C-terminus: tRNA uridine(34) acetyltransferase (541 aa).

The tract at residues 76 to 336 (KPVRTISGVA…GEYKPYREEE (261 aa)) is radical S-adenosyl-L-methionine (rSAM). Positions 79–350 (RTISGVAVVA…ISYAKSIMPK (272 aa)) constitute a Radical SAM core domain. 3 residues coordinate [4Fe-4S] cluster: C96, C101, and C104. Acetyl-CoA-binding positions include K156, 467 to 470 (QLHV), 491 to 493 (YGR), and Y524. Residues 401 to 541 (VMYKKGIMPD…VGAYMGKYLE (141 aa)) enclose the N-acetyltransferase domain.

It belongs to the ELP3 family. [4Fe-4S] cluster serves as cofactor.

The catalysed reaction is uridine(34) in tRNA + acetyl-CoA + S-adenosyl-L-methionine + H2O = 5-(carboxymethyl)uridine(34) in tRNA + 5'-deoxyadenosine + L-methionine + CoA + 2 H(+). It functions in the pathway tRNA modification. Functionally, tRNA uridine(34) acetyltransferase, which mediates formation of carboxymethyluridine in the wobble base at position 34 in tRNAs. The proposed mechanism is the following: (i) recruits S-adenosyl-L-methionine and cleaves it to generate a 5'-deoxyadenosine radical (5'-dA) in the radical S-adenosyl-L-methionine (rSAM) region, (ii) hydrolyzes acetyl-CoA in the N-acetyltransferase domain and (iii) an acetyl radical is formed by the products of the two domains and (iv) is transferred onto the C5 position of uridine(34) in the bound tRNA molecule. Does not show protein lysine acetyltransferase activity. The polypeptide is tRNA uridine(34) acetyltransferase (Methanocaldococcus jannaschii (strain ATCC 43067 / DSM 2661 / JAL-1 / JCM 10045 / NBRC 100440) (Methanococcus jannaschii)).